Reading from the N-terminus, the 321-residue chain is Small ribosomal subunit biogenesis GTPase RsgA (321 aa).

A CP-type G domain is found at 89–248 (QSWINRPPVA…VADTPGFNRP (160 aa)). GTP-binding positions include 138–141 (TKRD) and 190–198 (GPSGVGKTS). 4 residues coordinate Zn(2+): Cys273, Cys278, His280, and Cys286.

Belongs to the TRAFAC class YlqF/YawG GTPase family. RsgA subfamily. Monomer. Associates with 30S ribosomal subunit, binds 16S rRNA. Zn(2+) serves as cofactor.

The protein localises to the cytoplasm. Functionally, one of several proteins that assist in the late maturation steps of the functional core of the 30S ribosomal subunit. Helps release RbfA from mature subunits. May play a role in the assembly of ribosomal proteins into the subunit. Circularly permuted GTPase that catalyzes slow GTP hydrolysis, GTPase activity is stimulated by the 30S ribosomal subunit. The chain is Small ribosomal subunit biogenesis GTPase RsgA from Prochlorococcus marinus (strain MIT 9313).